Reading from the N-terminus, the 638-residue chain is 1-deoxy-D-xylulose-5-phosphate synthase (638 aa).

Thiamine diphosphate-binding positions include H78 and 119 to 121; that span reads GHS. Residue D151 participates in Mg(2+) binding. Residues 152–153, N180, Y289, and E371 contribute to the thiamine diphosphate site; that span reads GA. N180 lines the Mg(2+) pocket.

Belongs to the transketolase family. DXPS subfamily. Homodimer. The cofactor is Mg(2+). Thiamine diphosphate is required as a cofactor.

The enzyme catalyses D-glyceraldehyde 3-phosphate + pyruvate + H(+) = 1-deoxy-D-xylulose 5-phosphate + CO2. It functions in the pathway metabolic intermediate biosynthesis; 1-deoxy-D-xylulose 5-phosphate biosynthesis; 1-deoxy-D-xylulose 5-phosphate from D-glyceraldehyde 3-phosphate and pyruvate: step 1/1. Catalyzes the acyloin condensation reaction between C atoms 2 and 3 of pyruvate and glyceraldehyde 3-phosphate to yield 1-deoxy-D-xylulose-5-phosphate (DXP). The chain is 1-deoxy-D-xylulose-5-phosphate synthase from Bartonella bacilliformis (strain ATCC 35685 / KC583 / Herrer 020/F12,63).